We begin with the raw amino-acid sequence, 333 residues long: Methionine import ATP-binding protein MetN 1 (333 aa).

One can recognise an ABC transporter domain in the interval Ile2–Val241. Residue Gly38–Ser45 participates in ATP binding.

It belongs to the ABC transporter superfamily. Methionine importer (TC 3.A.1.24) family. In terms of assembly, the complex is composed of two ATP-binding proteins (MetN), two transmembrane proteins (MetI) and a solute-binding protein (MetQ).

The protein resides in the cell membrane. The catalysed reaction is L-methionine(out) + ATP + H2O = L-methionine(in) + ADP + phosphate + H(+). The enzyme catalyses D-methionine(out) + ATP + H2O = D-methionine(in) + ADP + phosphate + H(+). In terms of biological role, part of the ABC transporter complex MetNIQ involved in methionine import. Responsible for energy coupling to the transport system. This Bacillus licheniformis (strain ATCC 14580 / DSM 13 / JCM 2505 / CCUG 7422 / NBRC 12200 / NCIMB 9375 / NCTC 10341 / NRRL NRS-1264 / Gibson 46) protein is Methionine import ATP-binding protein MetN 1.